Here is a 157-residue protein sequence, read N- to C-terminus: MDKFPMTPEGYHALDEELKRRQQEERPRIIQAIAEARSHGDLSENAEYHAAKEAQSLNEGRIAELEDKLSRAEIIDVSKLSGNTVMFGATVTLVDEDTEEEKIYQIVGESEADVKAGRVSITSPTARALIGKKIGDSVEVNTPGGGKSYEILNVAFQ.

The tract at residues 1–24 (MDKFPMTPEGYHALDEELKRRQQE) is disordered. Positions 12–24 (HALDEELKRRQQE) are enriched in basic and acidic residues. Residues 53-73 (EAQSLNEGRIAELEDKLSRAE) adopt a coiled-coil conformation.

This sequence belongs to the GreA/GreB family.

Functionally, necessary for efficient RNA polymerase transcription elongation past template-encoded arresting sites. The arresting sites in DNA have the property of trapping a certain fraction of elongating RNA polymerases that pass through, resulting in locked ternary complexes. Cleavage of the nascent transcript by cleavage factors such as GreA or GreB allows the resumption of elongation from the new 3'terminus. GreA releases sequences of 2 to 3 nucleotides. The protein is Transcription elongation factor GreA of Beijerinckia indica subsp. indica (strain ATCC 9039 / DSM 1715 / NCIMB 8712).